A 625-amino-acid chain; its full sequence is MSSRAGPMSKEKNVQGGYRPEVEQLVQGLAGTRLASSQDDGGEWEVISKKNKNKPGNTSGKTWVSQNSNPPRAWGGQQQGRGSNVSGRGNNVSGRGNGNGRGIQANISGRGRALSRKYDNNFVAPPPVSRPPLEGGWNWQARGGSAQHTAVQEFPDVEDDVDNASEEENDSDALDDSDDDLASDDYDSDVSQKSHGSRKQNKWFKKFFGSLDSLSIEQINEPQRQWHCPACQNGPGAIDWYNLHPLLAHARTKGARRVKLHRELAEVLEKDLQMRGASVIPCGEIYGQWKGLGEDEKDYEIVWPPMVIIMNTRLDKDDNDKWLGMGNQELLEYFDKYEALRARHSYGPQGHRGMSVLMFESSATGYLEAERLHRELAEMGLDRIAWGQKRSMFSGGVRQLYGFLATKQDLDIFNQHSQGKTRLKFELKSYQEMVVKELRQISEDNQQLNYFKNKLSKQNKHAKVLEESLEIMSEKLRRTAEDNRIVRQRTKMQHEQNREEMDAHDRFFMDSIKQIHERRDAKEENFEMLQQQERAKVVGQQQQNINPSSNDDCRKRAEEVSSFIEFQEKEMEEFVEEREMLIKDQEKKMEDMKKRHHEEIFDLEKEFDEALEQLMYKHGLHNEDD.

3 disordered regions span residues 1–20 (MSSR…GYRP), 30–148 (AGTR…SAQH), and 161–195 (VDNA…QKSH). The span at 54–70 (KPGNTSGKTWVSQNSNP) shows a compositional bias: polar residues. Low complexity predominate over residues 80 to 94 (GRGSNVSGRGNNVSG). Residues 161–188 (VDNASEEENDSDALDDSDDDLASDDYDS) show a composition bias toward acidic residues. 2 coiled-coil regions span residues 452–533 (KNKL…QQQE) and 564–615 (IEFQ…EQLM).

Belongs to the SGS3 family. As to quaternary structure, interacts with begomoviruses protein V2. Interacts with SGIP1 in cytoplasmic granules.

It localises to the cytoplasm. Its subcellular location is the perinuclear region. The protein resides in the cytoplasmic granule. Functionally, required for post-transcriptional gene silencing and natural virus resistance. May bind nucleic acids and is essential for the biogenesis of trans-acting siRNAs but is not required for silencing induced by IR-PTGS. Involved in the juvenile-to-adult transition regulation. In case of begomoviruses infection, it is targeted by the viral protein V2 leading to suppression of post-transcriptional gene silencing. Involved in the mechanisms necessary for quick response to heat and subsequent heritable transgenerational memory of heat acclimation (global warming) such as early flowering and attenuated immunity; this process includes epigenetic regulation as well as post-transcriptional gene silencing (PTGS). In response to heat, HSFA2 is activated and promotes the expression of REF6 which in turn derepresses HSFA2, thus establishing an inheritable feedback loop able to trigger SGIP1 and subsequent SGIP1-mediated SGS3 degradation; this prevents the biosynthesis of trans-acting siRNA (tasiRNA) and leads to the release of HTT5, which drives early flowering but attenuates immunity. This chain is Protein SUPPRESSOR OF GENE SILENCING 3, found in Arabidopsis thaliana (Mouse-ear cress).